Here is a 360-residue protein sequence, read N- to C-terminus: MAISPEVEHPNKAFGFAARDPSGLLSPFNFSRRATGEHDVQFKVLYCGICHSDLHMIKNEWGFTKYPIVPGHEIVGVVTEVGSKVEKFKVGDKVGVGCLVGSCRKCDMCSQDLENYCPDQILTYSATYTDGTTTYGGYSSLMVADEHFVIRWPENLPMDIGAPLLCAGITTYSPLRHFGLDKPGTHVGIVGLGGLGHVAVKFAKAFGAKVTVISTSEGKKQEAVEKLGADAFLVSRDPEQMQAAAATLDGIIDTVSAVHPILPLVNLLKSQGKLIMVGAPEKPIELPVFPLLLGRKIVAGSAIGGLKETQDMIDFAAKHNILPDVELIPMDYVNTAMERLLKADVKYRFVIDICNTLKSA.

An Enoyl reductase (ER) domain is found at 23–351 (GLLSPFNFSR…KADVKYRFVI (329 aa)). Cys50 is a binding site for Zn(2+). Ser52 is an an alcohol binding site. Ser52 is a binding site for NADP(+). Residues Asp53, His72, Glu73, Cys103, Cys106, Cys109, Cys117, and Cys166 each coordinate Zn(2+). Residue His72 coordinates an alcohol. 12 residues coordinate NADP(+): Leu192, Gly194, Leu195, Ser214, Thr215, Ser216, Lys219, Lys220, Val277, Ala279, Ser301, and Arg348.

It belongs to the zinc-containing alcohol dehydrogenase family. Class-P subfamily. Homodimer. The cofactor is Zn(2+). In terms of tissue distribution, confined to roots.

The protein resides in the cytoplasm. The catalysed reaction is (2R)-1,2-dihydrovomilenine + NADP(+) = vomilenine + NADPH + H(+). The protein operates within alkaloid biosynthesis; ajmaline biosynthesis. With respect to regulation, inhibited by EDTA and p-hydroxymercuribenzoate, a sulfhydryl reagent. Alcohol dehydrogenase involved in the biosynthesis of ajmaline-type monoterpenoid indole alkaloids (MIAs) natural products, important plant-derived pharmaceuticals used in the therapy of heart disorders. Catalyzes the conversion of vomilenine to 1,2-dihydrovomilenine, an intermediate chemical in the biosynthesis of ajmaline. In Rauvolfia serpentina (Serpentine wood), this protein is Vomilenine reductase.